Consider the following 394-residue polypeptide: Penicillopepsin-3 (394 aa).

An N-terminal signal peptide occupies residues 1–20; that stretch reads MVSFTQLQLAFLGLSALGAA. Residues 21–70 constitute a propeptide, activation peptide; the sequence is VPVTGTSEKKTFSLNQVKVAGTKTKNPAEHYANALRKYGAEVPSHVLAAA. Positions 87–392 constitute a Peptidase A1 domain; that stretch reads YLTPIDVGGT…DASGPRLGFA (306 aa). Catalysis depends on residues Asp103 and Asp284. Cys320 and Cys355 are joined by a disulfide.

Belongs to the peptidase A1 family. Monomer.

The protein resides in the secreted. It catalyses the reaction Hydrolysis of proteins with broad specificity similar to that of pepsin A, preferring hydrophobic residues at P1 and P1', but also cleaving 20-Gly-|-Glu-21 in the B chain of insulin. Clots milk, and activates trypsinogen.. Functionally, secreted aspartic endopeptidase that allows assimilation of proteinaceous substrates. The scissile peptide bond is attacked by a nucleophilic water molecule activated by two aspartic residues in the active site. Shows a broad primary substrate specificity. Favors hydrophobic residues at the P1 and P1' positions, but can also activate trypsinogen and hydrolyze the B chain of insulin between positions 'Gly-20' and 'Glu-21'. This chain is Penicillopepsin-3, found in Penicillium janthinellum (Penicillium vitale).